Reading from the N-terminus, the 424-residue chain is D-inositol 3-phosphate glycosyltransferase (424 aa).

1D-myo-inositol 3-phosphate-binding positions include H9, D20 to N25, K78, Y110, T134, and R154. A UDP-N-acetyl-alpha-D-glucosamine-binding site is contributed by G23. UDP-N-acetyl-alpha-D-glucosamine contacts are provided by R231, K236, and R295. Mg(2+)-binding residues include Y304, Q305, and A307. The UDP-N-acetyl-alpha-D-glucosamine site is built by E317 and E325. T331 lines the Mg(2+) pocket.

It belongs to the glycosyltransferase group 1 family. MshA subfamily. Homodimer.

The enzyme catalyses 1D-myo-inositol 3-phosphate + UDP-N-acetyl-alpha-D-glucosamine = 1D-myo-inositol 2-acetamido-2-deoxy-alpha-D-glucopyranoside 3-phosphate + UDP + H(+). Its function is as follows. Catalyzes the transfer of a N-acetyl-glucosamine moiety to 1D-myo-inositol 3-phosphate to produce 1D-myo-inositol 2-acetamido-2-deoxy-glucopyranoside 3-phosphate in the mycothiol biosynthesis pathway. In Corynebacterium urealyticum (strain ATCC 43042 / DSM 7109), this protein is D-inositol 3-phosphate glycosyltransferase.